Consider the following 121-residue polypeptide: Large ribosomal subunit protein bL20 (121 aa).

Belongs to the bacterial ribosomal protein bL20 family.

In terms of biological role, binds directly to 23S ribosomal RNA and is necessary for the in vitro assembly process of the 50S ribosomal subunit. It is not involved in the protein synthesizing functions of that subunit. The chain is Large ribosomal subunit protein bL20 from Moorella thermoacetica (strain ATCC 39073 / JCM 9320).